A 698-amino-acid chain; its full sequence is Probable threonine--tRNA ligase 2, cytoplasmic (698 aa).

A TGS domain is found at 38 to 100 (GGGNIKLNDG…EMSGKDYNIE (63 aa)). Positions 541 to 560 (NNNNNNNNNNEEINDNNNNN) are disordered.

This sequence belongs to the class-II aminoacyl-tRNA synthetase family.

The protein resides in the cytoplasm. The catalysed reaction is tRNA(Thr) + L-threonine + ATP = L-threonyl-tRNA(Thr) + AMP + diphosphate + H(+). The chain is Probable threonine--tRNA ligase 2, cytoplasmic (thrS2) from Dictyostelium discoideum (Social amoeba).